The primary structure comprises 84 residues: UPF0457 protein BALH_2270 (84 aa).

The protein belongs to the UPF0457 family.

This chain is UPF0457 protein BALH_2270, found in Bacillus thuringiensis (strain Al Hakam).